Reading from the N-terminus, the 502-residue chain is Glutamate--tRNA ligase (502 aa).

The short motif at 9 to 19 is the 'HIGH' region element; it reads PSPTGFPHVGT. The short motif at 250-254 is the 'KMSKS' region element; it reads KLSKR. Lysine 253 contacts ATP.

It belongs to the class-I aminoacyl-tRNA synthetase family. Glutamate--tRNA ligase type 1 subfamily. As to quaternary structure, monomer.

The protein resides in the cytoplasm. The catalysed reaction is tRNA(Glu) + L-glutamate + ATP = L-glutamyl-tRNA(Glu) + AMP + diphosphate. Functionally, catalyzes the attachment of glutamate to tRNA(Glu) in a two-step reaction: glutamate is first activated by ATP to form Glu-AMP and then transferred to the acceptor end of tRNA(Glu). The protein is Glutamate--tRNA ligase of Acinetobacter baylyi (strain ATCC 33305 / BD413 / ADP1).